Reading from the N-terminus, the 220-residue chain is Grancalcin (220 aa).

EF-hand domains lie at serine 51–serine 86, phenylalanine 92–tryptophan 127, alanine 122–arginine 157, and leucine 158–aspartate 193. Ca(2+)-binding residues include aspartate 105, aspartate 107, threonine 109, lysine 111, glutamate 116, aspartate 135, aspartate 137, serine 139, threonine 141, and glutamate 146.

Homodimer. Interacts with SRI and LCP1.

Its subcellular location is the cytoplasm. It localises to the cytoplasmic granule membrane. Functionally, calcium-binding protein that may play a role in the adhesion of neutrophils to fibronectin. May play a role in the formation of focal adhesions. The polypeptide is Grancalcin (Gca) (Mus musculus (Mouse)).